We begin with the raw amino-acid sequence, 332 residues long: Melanocortin receptor 4 (332 aa).

Residues 1-43 (MNSTLQHGMHTSLHFWNRSTYGQHSNATESLGKGYPDGGCYEQ) lie on the Extracellular side of the membrane. N-linked (GlcNAc...) asparagine glycosylation is found at Asn-2, Asn-17, and Asn-26. 2 cysteine pairs are disulfide-bonded: Cys-40-Cys-279 and Cys-271-Cys-277. The chain crosses the membrane as a helical span at residues 44–69 (LFVSPEVFVTLGVISLLENILVIVAI). At 70-81 (AKNKNLHSPMYF) the chain is on the cytoplasmic side. A helical transmembrane segment spans residues 82–106 (FICSLAVADMLVSVSNGSETIVITL). Positions 100, 122, and 126 each coordinate Ca(2+). Residues 107 to 123 (LNSTDTDAQSFTVNIDN) lie on the Extracellular side of the membrane. The chain crosses the membrane as a helical span at residues 124-145 (VIDSVICSSLLASICSLLSIAV). The Cytoplasmic segment spans residues 146 to 165 (DRYFTIFYALQYHNIMTVRR). The helical transmembrane segment at 166-186 (VGIIISCIWAACTVSGILFII) threads the bilayer. The Extracellular portion of the chain corresponds to 187 to 191 (YSDST). A helical membrane pass occupies residues 192-215 (AVIICLITMFFTMLALMASLYVHM). Over 216 to 248 (FLMARLHIKRIAVLPGTGTIRQGANMKGAITLT) the chain is Cytoplasmic. The helical transmembrane segment at 249-271 (ILIGVFVVCWAPFFLHLIFYISC) threads the bilayer. At 272–280 (PQNPYCVCF) the chain is on the extracellular side. A helical transmembrane segment spans residues 281 to 304 (MSHFNLYLILIMCNSIIDPLIYAL). Topologically, residues 305 to 332 (RSQELRKTFKEIICCYPLGGLCDLSSRY) are cytoplasmic. Cys-318 carries the S-palmitoyl cysteine lipid modification.

This sequence belongs to the G-protein coupled receptor 1 family. As to quaternary structure, homodimer; disulfide-linked, also forms higher order oligomers. Interacts with GNAS. Interacts with ATRNL1. Interacts with MGRN1; this interaction competes with GNAS-binding and thus inhibits agonist-induced cAMP production. Interacts with MRAP and MRAP2; these associated factors increase ligand-sensitivity and generation of cAMP.

Its subcellular location is the cell membrane. Functionally, hormone receptor that acts as a key component of the leptin-melanocortin pathway at the intersection of homeostatic maintenance of energetic state. Plays a role in regulating food intake: activation by a stimulating hormone such as anorexigenic alpha-melanocyte stimulating hormone (alpha-MSH) inhibits appetite, whereas binding to a natural antagonist like Agouti-related protein/AGRP promotes appetite. G-protein-coupled receptor that activates conventional Galphas signaling leading to induction of anorexogenic signaling in the hypothalamus to result in negative energy balance. Regulates the firing activity of neurons from the hypothalamus by alpha-MSH and AGRP independently of Galphas signaling by ligand-induced coupling of closure of inwardly rectifying potassium channel KCNJ13. In intestinal epithelial cells, plays a role in the inhibition of hepatic glucose production via nesfatin-1/NUCB2 leading to increased cyclic adenosine monophosphate (cAMP) levels and glucagon-like peptide 1 (GLP-1) secretion in the intestinal epithelium. In Vulpes vulpes (Red fox), this protein is Melanocortin receptor 4 (MC4R).